The primary structure comprises 379 residues: Chaperone protein DnaJ (379 aa).

The 65-residue stretch at 5–69 (DYYEVLGISK…NKRATIDQFG (65 aa)) folds into the J domain. Residues 136–218 (GTTKEISIRK…CHGKGTENKT (83 aa)) form a CR-type zinc finger. 8 residues coordinate Zn(2+): Cys-149, Cys-152, Cys-166, Cys-169, Cys-192, Cys-195, Cys-206, and Cys-209. CXXCXGXG motif repeat units lie at residues 149 to 156 (CETCHGDG), 166 to 173 (CSYCNGAG), 192 to 199 (CPKCNGSG), and 206 to 213 (CPTCHGKG).

Belongs to the DnaJ family. In terms of assembly, homodimer. It depends on Zn(2+) as a cofactor.

It localises to the cytoplasm. In terms of biological role, participates actively in the response to hyperosmotic and heat shock by preventing the aggregation of stress-denatured proteins and by disaggregating proteins, also in an autonomous, DnaK-independent fashion. Unfolded proteins bind initially to DnaJ; upon interaction with the DnaJ-bound protein, DnaK hydrolyzes its bound ATP, resulting in the formation of a stable complex. GrpE releases ADP from DnaK; ATP binding to DnaK triggers the release of the substrate protein, thus completing the reaction cycle. Several rounds of ATP-dependent interactions between DnaJ, DnaK and GrpE are required for fully efficient folding. Also involved, together with DnaK and GrpE, in the DNA replication of plasmids through activation of initiation proteins. This is Chaperone protein DnaJ from Staphylococcus aureus.